The following is an 806-amino-acid chain: Mitochondrial intermediate peptidase (806 aa).

Residues 1–29 (MLSRHLTVLRSACRVSHDLRVPSTQAVRK) constitute a mitochondrion transit peptide. His-581 contributes to the Zn(2+) binding site. Glu-582 is a catalytic residue. His-585 and His-588 together coordinate Zn(2+).

This sequence belongs to the peptidase M3 family. It depends on Zn(2+) as a cofactor.

The protein localises to the mitochondrion matrix. It catalyses the reaction Release of an N-terminal octapeptide as second stage of processing of some proteins imported into the mitochondrion.. Its function is as follows. Cleaves proteins, imported into the mitochondrion, to their mature size. While most mitochondrial precursor proteins are processed to the mature form in one step by mitochondrial processing peptidase (MPP), the sequential cleavage by MIP of an octapeptide after initial processing by MPP is a required step for a subgroup of nuclear-encoded precursor proteins destined for the matrix or the inner membrane. The protein is Mitochondrial intermediate peptidase (OCT1) of Malassezia globosa (strain ATCC MYA-4612 / CBS 7966) (Dandruff-associated fungus).